The chain runs to 281 residues: Aliphatic sulfonates import ATP-binding protein SsuB (281 aa).

The ABC transporter domain maps to 40–263 (LTLRNLRKSF…RRGSADLAAL (224 aa)). 72 to 79 (GRSGCGKS) serves as a coordination point for ATP.

The protein belongs to the ABC transporter superfamily. Aliphatic sulfonates importer (TC 3.A.1.17.2) family. In terms of assembly, the complex is composed of two ATP-binding proteins (SsuB), two transmembrane proteins (SsuC) and a solute-binding protein (SsuA).

The protein resides in the cell inner membrane. It carries out the reaction ATP + H2O + aliphatic sulfonate-[sulfonate-binding protein]Side 1 = ADP + phosphate + aliphatic sulfonateSide 2 + [sulfonate-binding protein]Side 1.. In terms of biological role, part of the ABC transporter complex SsuABC involved in aliphatic sulfonates import. Responsible for energy coupling to the transport system. This is Aliphatic sulfonates import ATP-binding protein SsuB from Rhodopseudomonas palustris (strain BisA53).